Reading from the N-terminus, the 494-residue chain is Cytochrome P450 2A3 (494 aa).

Serine 131 bears the Phosphoserine mark. Residue lysine 379 is modified to N6-acetyllysine. Cysteine 439 serves as a coordination point for heme.

This sequence belongs to the cytochrome P450 family. Heme serves as cofactor. In terms of tissue distribution, lung.

Its subcellular location is the endoplasmic reticulum membrane. It localises to the microsome membrane. It catalyses the reaction an organic molecule + reduced [NADPH--hemoprotein reductase] + O2 = an alcohol + oxidized [NADPH--hemoprotein reductase] + H2O + H(+). In terms of biological role, cytochromes P450 are a group of heme-thiolate monooxygenases. In liver microsomes, this enzyme is involved in an NADPH-dependent electron transport pathway. It oxidizes a variety of structurally unrelated compounds, including steroids, fatty acids, and xenobiotics. The polypeptide is Cytochrome P450 2A3 (Cyp2a3) (Rattus norvegicus (Rat)).